A 71-amino-acid chain; its full sequence is UPF0346 protein Bcer98_1690 (71 aa).

It belongs to the UPF0346 family.

The sequence is that of UPF0346 protein Bcer98_1690 from Bacillus cytotoxicus (strain DSM 22905 / CIP 110041 / 391-98 / NVH 391-98).